A 674-amino-acid polypeptide reads, in one-letter code: Methionine--tRNA ligase (674 aa).

A 'HIGH' region motif is present at residues 11-21; that stretch reads PYANGDLHLGH. Zn(2+) is bound by residues Cys-142, Cys-145, Cys-155, and Cys-158. The short motif at 330–334 is the 'KMSKS' region element; that stretch reads KMSKS. Residue Lys-333 coordinates ATP. Residues 574 to 674 form the tRNA-binding domain; sequence DFMKVDLRIA…EGAQPGMRVK (101 aa).

It belongs to the class-I aminoacyl-tRNA synthetase family. MetG type 1 subfamily. Homodimer. Zn(2+) serves as cofactor.

It localises to the cytoplasm. The enzyme catalyses tRNA(Met) + L-methionine + ATP = L-methionyl-tRNA(Met) + AMP + diphosphate. In terms of biological role, is required not only for elongation of protein synthesis but also for the initiation of all mRNA translation through initiator tRNA(fMet) aminoacylation. In Francisella tularensis subsp. tularensis (strain WY96-3418), this protein is Methionine--tRNA ligase.